A 590-amino-acid polypeptide reads, in one-letter code: Leucine-rich repeat transmembrane neuronal protein 4 (590 aa).

A signal peptide spans 1–30 (MGFRLITQLKGMSVFLVLFPTLLLVMLTGA). An LRRNT domain is found at 31–61 (QRACPKNCRCDGKIVYCESHAFADIPENISG). Residues 31–424 (QRACPKNCRC…HEYEHVSFHK (394 aa)) lie on the Extracellular side of the membrane. Residue N58 is glycosylated (N-linked (GlcNAc...) asparagine). 10 LRR repeats span residues 62-83 (GSQGLSLRFNSIQKLKSNQFAG), 86-107 (QLIWLYLDHNYISSVDEDAFQG), 110-131 (RLKELILSSNKITYLHNKTFHP), 134-155 (NLRNLDLSYNKLQTLQSEQFKG), 158-179 (KLIILHLRSNSLKTVPIRVFQD), 182-203 (NLDFLDLGYNRLRSLSRNAFAG), 206-226 (KLKELHLEHNQFSKINFAHFP), 230-251 (NLRSIYLQWNRIRSVSQGLTWT), 254-275 (SLHTLDLSGNDIQAIEPGTFKC), and 278-299 (NLQKLNLDSNKLTNVSQETVNA). N126 carries N-linked (GlcNAc...) asparagine glycosylation. The N-linked (GlcNAc...) asparagine glycan is linked to N291. One can recognise an LRRCT domain in the interval 311 to 362 (NMWECSRSICPLFYWLKNFKGNKESTMICAGPKHIQGEKVSDAVETYNICSD). The chain crosses the membrane as a helical span at residues 425-445 (IIAGSVALFLSVAMILLVIYV). At 446–590 (SWKRYPASMK…PAIYLERITN (145 aa)) the chain is on the cytoplasmic side.

This sequence belongs to the LRRTM family. Peripherally associated with AMPAR complex. AMPAR complex consists of an inner core made of 4 pore-forming GluA/GRIA proteins (GRIA1, GRIA2, GRIA3 and GRIA4) and 4 major auxiliary subunits arranged in a twofold symmetry. One of the two pairs of distinct binding sites is occupied either by CNIH2, CNIH3 or CACNG2, CACNG3. The other harbors CACNG2, CACNG3, CACNG4, CACNG8 or GSG1L. This inner core of AMPAR complex is complemented by outer core constituents binding directly to the GluA/GRIA proteins at sites distinct from the interaction sites of the inner core constituents. Outer core constituents include at least PRRT1, PRRT2, CKAMP44/SHISA9, FRRS1L and NRN1. The proteins of the inner and outer core serve as a platform for other, more peripherally associated AMPAR constituents, including LRRTM4. Alone or in combination, these auxiliary subunits control the gating and pharmacology of the AMPAR complex and profoundly impact their biogenesis and protein processing. In terms of tissue distribution, predominantly in the brain (at protein level). Also expressed in the cerebellum and other tissues.

The protein resides in the cell membrane. It localises to the postsynaptic cell membrane. Its function is as follows. May play a role in the development and maintenance of the vertebrate nervous system. Exhibits strong synaptogenic activity, restricted to excitatory presynaptic differentiation. In Mus musculus (Mouse), this protein is Leucine-rich repeat transmembrane neuronal protein 4 (Lrrtm4).